Reading from the N-terminus, the 502-residue chain is MSKVTGKVSQIIGPVIDVEFQAGVDLPKIYDSLEIKKADGSILVLEVQSHIGENTVRTISMDSSDGLSRGAEVNATGSAIQMPVGDDVYGRLFNVIGDAIDGLGNLPKSGKDGLPIHREAPKFEDLSTSTEVLFTGIKVIDLIEPYAKGGKIGLFGGAGVGKTVLIQELINNIAKGHGGLSVFAGVGERTREGNDLLREMLESGIIKYGDDFMHSMEEGGWDLSKVDKSVMKDSKATFVFGQMNEPPGARARVALSGLTIAEYFRDGAGEGQGKDVLFFVDNIFRFTQAGSEVSALLGRMPSAVGYQPTLATEMGAMQERITSTKRGSITSVQAVYVPADDLTDPAPATTFAHLDATTVLSRKIAELGIYPAVDPLDSTSRILAPEILGKDHYSCAQRVKELLQRYKELQDIIAILGMEELSEEDKMAVGRARRVQRFLSQPFHVAEQFTGLKGVLVDIKDTIKGFNMIMDGELDHLPESAFNLKGTIEEAIEAGEKMLAEA.

ATP is bound at residue 156 to 163 (GGAGVGKT).

The protein belongs to the ATPase alpha/beta chains family. As to quaternary structure, F-type ATPases have 2 components, CF(1) - the catalytic core - and CF(0) - the membrane proton channel. CF(1) has five subunits: alpha(3), beta(3), gamma(1), delta(1), epsilon(1). CF(0) has three main subunits: a(1), b(2) and c(9-12). The alpha and beta chains form an alternating ring which encloses part of the gamma chain. CF(1) is attached to CF(0) by a central stalk formed by the gamma and epsilon chains, while a peripheral stalk is formed by the delta and b chains.

Its subcellular location is the cell membrane. It catalyses the reaction ATP + H2O + 4 H(+)(in) = ADP + phosphate + 5 H(+)(out). Functionally, produces ATP from ADP in the presence of a proton gradient across the membrane. The catalytic sites are hosted primarily by the beta subunits. The protein is ATP synthase subunit beta of Cellulophaga lytica (Cytophaga lytica).